The following is a 621-amino-acid chain: Transmembrane protein 200C (621 aa).

A disordered region spans residues 12-37 (ARKQDPLRPPSQIPKRKRKAKKRRKN). Positions 25 to 36 (PKRKRKAKKRRK) are enriched in basic residues. The chain crosses the membrane as a helical span at residues 53–73 (GLIALCGILVLLVGIAMAVVG). The disordered stretch occupies residues 80-147 (GTNREGGKQL…RAASPSSSST (68 aa)). A compositionally biased stretch (low complexity) spans 125 to 147 (SSSAGAPRSTPPARAASPSSSST). A helical transmembrane segment spans residues 167–187 (VFGPLIMGIGIFLFICANAVL). 3 disordered regions span residues 284–315 (WPPH…PREP), 347–368 (ASSC…QSTA), and 384–598 (LQGG…FTNK). A compositionally biased stretch (low complexity) spans 290 to 303 (APSGGRPRGAASPP). Positions 405-418 (PGERGSQEIPRGEL) are enriched in basic and acidic residues. Residues 479–490 (RAPPSPEPPPSP) are compositionally biased toward pro residues. Low complexity-rich tracts occupy residues 491 to 505 (GSAD…KAAS) and 523 to 533 (GSSQSDDPSSS). A compositionally biased stretch (polar residues) spans 586–595 (EQPQPVQRQF).

It belongs to the TMEM200 family.

Its subcellular location is the membrane. This is Transmembrane protein 200C (TMEM200C) from Homo sapiens (Human).